The sequence spans 78 residues: MQNIEKKIKKIIAQQLGLIEQKITNESLLVEDLNADSLDIVELIMAFEEEFNIEITDEEAENLTSVQSIFDIIKKYVF.

The Carrier domain maps to 2-77 (QNIEKKIKKI…SIFDIIKKYV (76 aa)). Ser-37 carries the O-(pantetheine 4'-phosphoryl)serine modification.

This sequence belongs to the acyl carrier protein (ACP) family. Post-translationally, 4'-phosphopantetheine is transferred from CoA to a specific serine of apo-ACP by AcpS. This modification is essential for activity because fatty acids are bound in thioester linkage to the sulfhydryl of the prosthetic group.

It localises to the cytoplasm. The protein operates within lipid metabolism; fatty acid biosynthesis. Its function is as follows. Carrier of the growing fatty acid chain in fatty acid biosynthesis. In Buchnera aphidicola subsp. Baizongia pistaciae (strain Bp), this protein is Acyl carrier protein.